The sequence spans 277 residues: Large ribosomal subunit protein uL2 (277 aa).

2 disordered regions span residues Met1–Gly55 and Lys217–Arg277. A compositionally biased stretch (basic residues) spans Leu37–Gly55.

The protein belongs to the universal ribosomal protein uL2 family. As to quaternary structure, part of the 50S ribosomal subunit. Forms a bridge to the 30S subunit in the 70S ribosome.

One of the primary rRNA binding proteins. Required for association of the 30S and 50S subunits to form the 70S ribosome, for tRNA binding and peptide bond formation. It has been suggested to have peptidyltransferase activity; this is somewhat controversial. Makes several contacts with the 16S rRNA in the 70S ribosome. The sequence is that of Large ribosomal subunit protein uL2 from Thermobifida fusca (strain YX).